Consider the following 273-residue polypeptide: 2,3,4,5-tetrahydropyridine-2,6-dicarboxylate N-succinyltransferase (273 aa).

Substrate is bound by residues arginine 104 and aspartate 141.

Belongs to the transferase hexapeptide repeat family. Homotrimer.

It localises to the cytoplasm. The catalysed reaction is (S)-2,3,4,5-tetrahydrodipicolinate + succinyl-CoA + H2O = (S)-2-succinylamino-6-oxoheptanedioate + CoA. It functions in the pathway amino-acid biosynthesis; L-lysine biosynthesis via DAP pathway; LL-2,6-diaminopimelate from (S)-tetrahydrodipicolinate (succinylase route): step 1/3. In Nitrosomonas europaea (strain ATCC 19718 / CIP 103999 / KCTC 2705 / NBRC 14298), this protein is 2,3,4,5-tetrahydropyridine-2,6-dicarboxylate N-succinyltransferase.